The chain runs to 268 residues: MINKINKFFKNNEFSPSKQRGQNFLIDQNIINNVVEAVSKINPSKVLEIGPGLGAISEQLIKRFADNYYAIELDKKLFHHLNERLLKDHILHADALEIDWKSIFDNLGDNPTMVGNLPYNISSKLIKKFILSTYRCAIIMVQKEMGLRLLAKINSKDYSAFSALCQYSLSVSKIIEINETAFIPQPKVRSTLLFLEKKDIAFNEGYEKFLKLIFLSRRKTILNNLKNNYDPKLIIQSLVSLGFKKTSRAQELSPTQLFSLYESLSKLC.

Residues Asn23, Leu25, Gly50, Glu72, Asp94, and Asn116 each coordinate S-adenosyl-L-methionine.

Belongs to the class I-like SAM-binding methyltransferase superfamily. rRNA adenine N(6)-methyltransferase family. RsmA subfamily.

It localises to the cytoplasm. The catalysed reaction is adenosine(1518)/adenosine(1519) in 16S rRNA + 4 S-adenosyl-L-methionine = N(6)-dimethyladenosine(1518)/N(6)-dimethyladenosine(1519) in 16S rRNA + 4 S-adenosyl-L-homocysteine + 4 H(+). Functionally, specifically dimethylates two adjacent adenosines (A1518 and A1519) in the loop of a conserved hairpin near the 3'-end of 16S rRNA in the 30S particle. May play a critical role in biogenesis of 30S subunits. The sequence is that of Ribosomal RNA small subunit methyltransferase A from Mycoplasmoides gallisepticum (strain R(low / passage 15 / clone 2)) (Mycoplasma gallisepticum).